A 220-amino-acid polypeptide reads, in one-letter code: Iron-sulfur cluster repair protein YtfE (220 aa).

It belongs to the RIC family. YtfE subfamily. Homodimer.

It localises to the cytoplasm. In terms of biological role, di-iron-containing protein involved in the repair of iron-sulfur clusters damaged by oxidative and nitrosative stress conditions. The protein is Iron-sulfur cluster repair protein YtfE of Shigella boydii serotype 18 (strain CDC 3083-94 / BS512).